The following is a 33-amino-acid chain: Rhinophrynin-33 (33 aa).

As to expression, expressed by the skin glands.

Its subcellular location is the secreted. In terms of biological role, non-cytotoxic peptide with immunosuppressive and insulinotropic effects. Induces an increased production of the anti-inflammatory cytokine IL-10 and inhibits production of the pro-inflammatory cytokines TNF-alpha and IL-1beta, when incubated with mouse peritoneal cells. Does not display growth-inhibitory activity against the Gram-positive S.epidermidis and Gram-negative E.coli bacteria and against the opportunistic yeast pathogen C.parapsilosis (MIC&gt;128 uM). In addition, it lacks cytotoxic activity against mouse erythrocytes (LC(50)&gt;500 uM) and A549 human non-small cell lung adenocarcinoma cells (LC(50)&gt;100 uM). Moderately stimulates insulin release from rat clonal beta-cells and mouse pancreatic islets. Functionally, non-cytotoxic peptide with immunosuppressive but without insulinotropic effects. Inhibits production of the pro-inflammatory cytokines TNF-alpha, but has no effect on IL-10 and IL-1beta production, when incubated with mouse peritoneal cells. Has no activity of stimulation of insulin release. The sequence is that of Rhinophrynin-33 from Rhinophrynus dorsalis (Mexican burrowing toad).